A 186-amino-acid polypeptide reads, in one-letter code: ADP-ribosylation factor-like protein 6 (186 aa).

A lipid anchor (N-myristoyl glycine) is attached at Gly2. GTP contacts are provided by residues 24-31 (GLDNSGKT), Thr50, 69-73 (DMSGQ), Gly72, 130-133 (NKMD), and Ala164. 2 residues coordinate Mg(2+): Thr31 and Thr50.

It belongs to the small GTPase superfamily. Arf family. Interacts with SEC61B, ARL6IP1, ARL6IP2, ARL6IP3, ARL6IP4 ARL6IP5 and ARL6IP6. Interacts (GTP-bound form) with the BBSome a complex that contains BBS1, BBS2, BBS4, BBS5, BBS7, BBS8/TTC8, BBS9 and BBIP10. Interacts (GTP-free form) with IFT27.

The protein resides in the cell projection. Its subcellular location is the cilium membrane. The protein localises to the cytoplasm. It is found in the cytoskeleton. It localises to the cilium axoneme. The protein resides in the cilium basal body. Functionally, involved in membrane protein trafficking at the base of the ciliary organelle. Mediates recruitment onto plasma membrane of the BBSome complex which would constitute a coat complex required for sorting of specific membrane proteins to the primary cilia. Together with BBS1, is necessary for correct trafficking of PKD1 to primary cilia. Together with the BBSome complex and LTZL1, controls SMO ciliary trafficking and contributes to the sonic hedgehog (SHH) pathway regulation. May regulate cilia assembly and disassembly and subsequent ciliary signaling events such as the Wnt signaling cascade. Isoform 2 may be required for proper retinal function and organization. In Homo sapiens (Human), this protein is ADP-ribosylation factor-like protein 6 (ARL6).